The following is a 537-amino-acid chain: Bifunctional purine biosynthesis protein PurH (537 aa).

The region spanning 11–158 (ADIQRVRRAL…KNHAYVGVIV (148 aa)) is the MGS-like domain.

It belongs to the PurH family.

The enzyme catalyses (6R)-10-formyltetrahydrofolate + 5-amino-1-(5-phospho-beta-D-ribosyl)imidazole-4-carboxamide = 5-formamido-1-(5-phospho-D-ribosyl)imidazole-4-carboxamide + (6S)-5,6,7,8-tetrahydrofolate. The catalysed reaction is IMP + H2O = 5-formamido-1-(5-phospho-D-ribosyl)imidazole-4-carboxamide. It functions in the pathway purine metabolism; IMP biosynthesis via de novo pathway; 5-formamido-1-(5-phospho-D-ribosyl)imidazole-4-carboxamide from 5-amino-1-(5-phospho-D-ribosyl)imidazole-4-carboxamide (10-formyl THF route): step 1/1. The protein operates within purine metabolism; IMP biosynthesis via de novo pathway; IMP from 5-formamido-1-(5-phospho-D-ribosyl)imidazole-4-carboxamide: step 1/1. The protein is Bifunctional purine biosynthesis protein PurH of Parvibaculum lavamentivorans (strain DS-1 / DSM 13023 / NCIMB 13966).